Here is a 256-residue protein sequence, read N- to C-terminus: DNA repair protein RecO (256 aa).

The protein belongs to the RecO family.

Its function is as follows. Involved in DNA repair and RecF pathway recombination. The polypeptide is DNA repair protein RecO (Desulforamulus reducens (strain ATCC BAA-1160 / DSM 100696 / MI-1) (Desulfotomaculum reducens)).